A 563-amino-acid polypeptide reads, in one-letter code: Rhotekin (563 aa).

R14 bears the Omega-N-methylarginine mark. The 82-residue stretch at 17–98 (ALEMEFKRGR…LQRRKEAQVL (82 aa)) folds into the REM-1 domain. Phosphoserine is present on residues S30 and S106. A disordered region spans residues 96 to 116 (QVLGKTSRRPSDSGPPAERSP). R230 carries the post-translational modification Asymmetric dimethylarginine. Residue S232 is modified to Phosphoserine. Residues 309-416 (QPTASGTLRV…WMEALWQLFF (108 aa)) enclose the PH domain. Residues 518 to 563 (TFSLDAVPPDHSPRARSVAPLPPQRSPRTRGLCSKGQPRTWLQSPV) are disordered. Phosphoserine occurs at positions 520, 529, and 543.

As to quaternary structure, interacts via its C-terminal region with the TAX1BP3 PDZ domain. This interaction facilitates Rho-mediated activation of the c-Fos serum response element (SRE). Interacts with SEPT9. Specifically binds to GTP-bound RHOA, RHOB and RHOC and inhibits their GTPase activity. Highly expressed in prostate, moderately in kidney, heart, brain, spleen, testis, placenta, small intestine, pancreas, skeletal muscle and peripheral blood leukocytes, and weakly in ovary, colon and thymus. Weakly expressed in all normal cell lines tested. Overexpressed in various cancer cell lines.

Functionally, mediates Rho signaling to activate NF-kappa-B and may confer increased resistance to apoptosis to cells in gastric tumorigenesis. May play a novel role in the organization of septin structures. The polypeptide is Rhotekin (Homo sapiens (Human)).